The chain runs to 1826 residues: Protein TIC 214 (1826 aa).

Transmembrane regions (helical) follow at residues 18–38, 67–87, 127–147, 175–195, and 221–241; these read IINS…FSIG, FITG…HLAL, LSIQ…HFIL, VGWL…LVWI, and IFSI…PSPI. Positions 250–308 are disordered; sequence TEEGWESEEETDVEIETASETKGTKQEQEGSTEEDPSPSLFSEEKEDPDKIDETEEIRV. Acidic residues-rich tracts occupy residues 252 to 266 and 293 to 304; these read EGWE…EIET and EKEDPDKIDETE. A helical transmembrane segment spans residues 774-794; the sequence is LILIIQSIFRKYILLPSLIIV. A disordered region spans residues 1032–1057; the sequence is TKGLMKEKNSNAKKRGSPNKTSFNRK. A compositionally biased stretch (basic residues) spans 1042-1057; that stretch reads NAKKRGSPNKTSFNRK. The chain crosses the membrane as a helical span at residues 1081 to 1101; sequence FYLFITIFIKRIYIDIFVCII.

It belongs to the TIC214 family. As to quaternary structure, part of the Tic complex.

It is found in the plastid. The protein localises to the chloroplast inner membrane. Functionally, involved in protein precursor import into chloroplasts. May be part of an intermediate translocation complex acting as a protein-conducting channel at the inner envelope. The polypeptide is Protein TIC 214 (Daucus carota (Wild carrot)).